The following is a 171-amino-acid chain: MHPFYTRAATMIGEIAAAVSFISKFLRTKGLTSERQLQTFSQSLQELLAEHYKHHWFPEKPCKGSGYRCIRINHKMDPLIGQAAQRIGLSSQELFRLLPSELTLWVDPYEVSYRIGEDGSICVLYEASPAGGSSQNSTNVQMVDSRISCKEELLLGRTSPSKNYNMMTVSG.

Ser-159 is subject to Phosphoserine.

The protein belongs to the BTG family. Interacts with CNOT7 and CNOT8.

Functionally, anti-proliferative protein. In Rattus norvegicus (Rat), this protein is Protein BTG1 (Btg1).